Consider the following 81-residue polypeptide: Probable small nuclear ribonucleoprotein G (81 aa).

In terms of domain architecture, Sm spans 5–76 (GQPPALKKYM…VVTVEALEPV (72 aa)).

The protein belongs to the snRNP Sm proteins family.

The protein localises to the nucleus. Its function is as follows. Probable common Sm protein, is found in U1 and U2 snRNPs and may be part of the spliceosome. The sequence is that of Probable small nuclear ribonucleoprotein G (C29) from Medicago sativa (Alfalfa).